The primary structure comprises 557 residues: Formate--tetrahydrofolate ligase (557 aa).

Position 65-72 (65-72 (SPAGEGKT)) interacts with ATP.

Belongs to the formate--tetrahydrofolate ligase family.

It catalyses the reaction (6S)-5,6,7,8-tetrahydrofolate + formate + ATP = (6R)-10-formyltetrahydrofolate + ADP + phosphate. The protein operates within one-carbon metabolism; tetrahydrofolate interconversion. This is Formate--tetrahydrofolate ligase from Methylobacillus flagellatus (strain ATCC 51484 / DSM 6875 / VKM B-1610 / KT).